The following is a 771-amino-acid chain: U3 small nucleolar RNA-associated protein 14 homolog A (771 aa).

The interval 23-49 is disordered; that stretch reads PKDYLLSESEDEGDNDGERKHQKLLEA. Phosphoserine occurs at positions 29, 31, 52, 77, and 81. A coiled-coil region spans residues 40–67; it reads ERKHQKLLEAISSLDGKNRRKLAERSEA. Lysine 122 is covalently cross-linked (Glycyl lysine isopeptide (Lys-Gly) (interchain with G-Cter in SUMO2)). Threonine 205 carries the post-translational modification Phosphothreonine. Coiled coils occupy residues 216 to 290 and 317 to 347; these read SLEE…EKAR and LEAR…EEEE. Disordered regions lie at residues 334–355 and 367–557; these read TQKL…DVEE and MNAD…KKEQ. Residues 342 to 355 show a composition bias toward acidic residues; sequence ESEEEEGGTEDVEE. The segment covering 399 to 436 has biased composition (basic and acidic residues); the sequence is LEAHGVSESEGEERPVAEEEILLREFEERRSLRKRSEL. Residues serine 405 and serine 407 each carry the phosphoserine modification. Position 433 is a citrulline (arginine 433). Residues serine 437 and serine 445 each carry the phosphoserine modification. Residue lysine 449 forms a Glycyl lysine isopeptide (Lys-Gly) (interchain with G-Cter in SUMO2) linkage. Phosphoserine is present on serine 453. Residues 504–529 are compositionally biased toward basic and acidic residues; that stretch reads RPERVQTLEELEELGKEECFQNKELP. Lysine 519 participates in a covalent cross-link: Glycyl lysine isopeptide (Lys-Gly) (interchain with G-Cter in SUMO2). Residues 535-544 are compositionally biased toward polar residues; the sequence is GQQSERTPNN. Over residues 547–557 the composition is skewed to basic and acidic residues; that stretch reads DAPKEKKKKEQ. A Phosphoserine modification is found at serine 569. Arginine 589 is subject to Citrulline. Lysine 733 participates in a covalent cross-link: Glycyl lysine isopeptide (Lys-Gly) (interchain with G-Cter in SUMO2). Positions 740–751 are enriched in polar residues; it reads RSSSRSDLSVIQ. The disordered stretch occupies residues 740–771; the sequence is RSSSRSDLSVIQRNPKRITTRHKKQLKKCSVD. Basic residues predominate over residues 753–771; that stretch reads NPKRITTRHKKQLKKCSVD.

This sequence belongs to the UTP14 family. In terms of assembly, interacts with DHX37. Citrullinated by PADI4. As to expression, ubiquitously expressed.

It is found in the nucleus. It localises to the nucleolus. In terms of biological role, may be required for ribosome biogenesis. The protein is U3 small nucleolar RNA-associated protein 14 homolog A (UTP14A) of Homo sapiens (Human).